The following is a 399-amino-acid chain: 1-deoxy-D-xylulose 5-phosphate reductoisomerase (399 aa).

7 residues coordinate NADPH: T11, G12, S13, I14, G37, N39, and N125. K126 contacts 1-deoxy-D-xylulose 5-phosphate. E127 serves as a coordination point for NADPH. D151 lines the Mn(2+) pocket. Residues S152, E153, S177, and H200 each contribute to the 1-deoxy-D-xylulose 5-phosphate site. Mn(2+) is bound at residue E153. NADPH is bound at residue G206. 4 residues coordinate 1-deoxy-D-xylulose 5-phosphate: S213, N218, K219, and E222. E222 is a binding site for Mn(2+).

Belongs to the DXR family. Mg(2+) is required as a cofactor. The cofactor is Mn(2+).

It carries out the reaction 2-C-methyl-D-erythritol 4-phosphate + NADP(+) = 1-deoxy-D-xylulose 5-phosphate + NADPH + H(+). It functions in the pathway isoprenoid biosynthesis; isopentenyl diphosphate biosynthesis via DXP pathway; isopentenyl diphosphate from 1-deoxy-D-xylulose 5-phosphate: step 1/6. In terms of biological role, catalyzes the NADPH-dependent rearrangement and reduction of 1-deoxy-D-xylulose-5-phosphate (DXP) to 2-C-methyl-D-erythritol 4-phosphate (MEP). This chain is 1-deoxy-D-xylulose 5-phosphate reductoisomerase, found in Nostoc sp. (strain PCC 7120 / SAG 25.82 / UTEX 2576).